A 184-amino-acid polypeptide reads, in one-letter code: ADP-ribosylation factor-like protein 8b (184 aa).

The segment at residues 1-18 (MGLWDALLNWLRSLFFKQ) is an intramembrane region (note=Mediates targeting to membranes). Residues 29-34 (NAGKTS), 48-51 (MIPT), 70-74 (DLGGQ), and 129-132 (NKID) contribute to the GTP site.

Belongs to the small GTPase superfamily. Arf family. As to quaternary structure, interacts with tubulin.

It is found in the late endosome membrane. Its subcellular location is the lysosome membrane. The protein localises to the cytoplasm. The protein resides in the cytoskeleton. It localises to the spindle. Its function is as follows. May play a role in lysosome motility. May play a role in chromosome segregation. In terms of biological role, (Microbial infection) Component of tomato mosaic virus (ToMV) RNA replication complexes. Required for tobamovirus multiplication, especially for efficient negative-strand RNA synthesis and viral RNA capping. The sequence is that of ADP-ribosylation factor-like protein 8b from Arabidopsis thaliana (Mouse-ear cress).